Reading from the N-terminus, the 468-residue chain is Glutamate--tRNA ligase 2 (468 aa).

A 'HIGH' region motif is present at residues 11–21 (PSPTGFLHIGG). The short motif at 239–243 (KLSKR) is the 'KMSKS' region element. Lys242 serves as a coordination point for ATP.

This sequence belongs to the class-I aminoacyl-tRNA synthetase family. Glutamate--tRNA ligase type 1 subfamily. Monomer.

The protein localises to the cytoplasm. It carries out the reaction tRNA(Glu) + L-glutamate + ATP = L-glutamyl-tRNA(Glu) + AMP + diphosphate. In terms of biological role, catalyzes the attachment of glutamate to tRNA(Glu) in a two-step reaction: glutamate is first activated by ATP to form Glu-AMP and then transferred to the acceptor end of tRNA(Glu). The chain is Glutamate--tRNA ligase 2 from Ruegeria pomeroyi (strain ATCC 700808 / DSM 15171 / DSS-3) (Silicibacter pomeroyi).